The sequence spans 98 residues: NADH-ubiquinone oxidoreductase chain 4L (98 aa).

3 helical membrane passes run 1–21, 29–49, and 61–81; these read MSMVYINIFLAFIMSLMGLLM, SLLCLEGMMLSLFIMMAVAIL, and IILLVFAACEAALGLSLLVMV.

The protein belongs to the complex I subunit 4L family. In terms of assembly, core subunit of respiratory chain NADH dehydrogenase (Complex I) which is composed of 45 different subunits.

The protein resides in the mitochondrion inner membrane. The enzyme catalyses a ubiquinone + NADH + 5 H(+)(in) = a ubiquinol + NAD(+) + 4 H(+)(out). Functionally, core subunit of the mitochondrial membrane respiratory chain NADH dehydrogenase (Complex I) which catalyzes electron transfer from NADH through the respiratory chain, using ubiquinone as an electron acceptor. Part of the enzyme membrane arm which is embedded in the lipid bilayer and involved in proton translocation. This chain is NADH-ubiquinone oxidoreductase chain 4L (MT-ND4L), found in Felis catus (Cat).